Consider the following 422-residue polypeptide: Probable Na(+)/H(+) antiporter 2 (422 aa).

A run of 13 helical transmembrane segments spans residues 3–23 (IVLFLGYLSILFAGGAIIAKI), 28–48 (GIPDIPLLLIFGLILSILNVI), 52–72 (IVESSFDFIGNFGLIILLFIG), 93–113 (ILALLIVWIISGIVFNFVFHL), 119–139 (IGLLFGAIVSATDPATLIPIF), 157–177 (VFNDPLGIVVTLICLSALGLA), 183–203 (ILEFFSLAVGGIILGVIAGKF), 216–236 (YIAPFTLGLAIAFWYFAEGIF), 242–262 (YEISGFMAVAIMGLYIGNVIV), 281–301 (LSIFIRILIFVLLGASISIPL), 307–327 (LPAFLCALGSILLARPVGVLI), 341–361 (IYLALEGPRGVVPATLAAMVY), and 384–404 (LAGTILVATFMTIIVSVVLEA).

This sequence belongs to the monovalent cation:proton antiporter 1 (CPA1) transporter (TC 2.A.36) family.

The protein localises to the cell membrane. This is probably a Na(+)/H(+) antiporter. The protein is Probable Na(+)/H(+) antiporter 2 of Methanocaldococcus jannaschii (strain ATCC 43067 / DSM 2661 / JAL-1 / JCM 10045 / NBRC 100440) (Methanococcus jannaschii).